The following is an 83-amino-acid chain: Colicin-E5 immunity protein in ColE9 (83 aa).

The protein is Colicin-E5 immunity protein in ColE9 of Escherichia coli.